We begin with the raw amino-acid sequence, 760 residues long: uncharacterized protein (760 aa).

The signal sequence occupies residues 1-20 (MKFKLFLGSSFFGVATLLIA). The N-palmitoyl cysteine moiety is linked to residue Cys21. Cys21 carries the S-diacylglycerol cysteine lipid modification. 3 disordered regions span residues 221 to 243 (ENAA…LQLK), 272 to 315 (AKTN…TSDD), and 705 to 741 (IKAT…NDKA). Residues 272–284 (AKTNGEKGNEKQE) show a composition bias toward basic and acidic residues. Over residues 300–312 (KNTSQDKTQNTQT) the composition is skewed to polar residues. The segment covering 705–721 (IKATSKEGEQNQGKKGD) has biased composition (basic and acidic residues).

Belongs to the MG185/MG260 family.

The protein resides in the cell membrane. This is an uncharacterized protein from Mycoplasma pneumoniae (strain ATCC 29342 / M129 / Subtype 1) (Mycoplasmoides pneumoniae).